A 332-amino-acid polypeptide reads, in one-letter code: 5-formaminoimidazole-4-carboxamide-1-(beta)-D-ribofuranosyl 5'-monophosphate synthetase (332 aa).

Residues His9 and Ser72 each contribute to the 5-amino-1-(5-phospho-beta-D-ribosyl)imidazole-4-carboxamide site. Residues 93–323 form the ATP-grasp domain; the sequence is RNLFPWESNQ…IGREINLAIQ (231 aa). Residues 123-183 and Glu205 contribute to the ATP site; that span reads PEDV…IPMY. Asn229 contacts 5-amino-1-(5-phospho-beta-D-ribosyl)imidazole-4-carboxamide. Mg(2+) contacts are provided by Glu268 and Glu281.

The protein belongs to the phosphohexose mutase family. Mg(2+) is required as a cofactor. Mn(2+) serves as cofactor.

The enzyme catalyses 5-amino-1-(5-phospho-beta-D-ribosyl)imidazole-4-carboxamide + formate + ATP = 5-formamido-1-(5-phospho-D-ribosyl)imidazole-4-carboxamide + ADP + phosphate. It participates in purine metabolism; IMP biosynthesis via de novo pathway; 5-formamido-1-(5-phospho-D-ribosyl)imidazole-4-carboxamide from 5-amino-1-(5-phospho-D-ribosyl)imidazole-4-carboxamide (formate route): step 1/1. Catalyzes the ATP- and formate-dependent formylation of 5-aminoimidazole-4-carboxamide-1-beta-d-ribofuranosyl 5'-monophosphate (AICAR) to 5-formaminoimidazole-4-carboxamide-1-beta-d-ribofuranosyl 5'-monophosphate (FAICAR) in the absence of folates. The polypeptide is 5-formaminoimidazole-4-carboxamide-1-(beta)-D-ribofuranosyl 5'-monophosphate synthetase (Metallosphaera sedula (strain ATCC 51363 / DSM 5348 / JCM 9185 / NBRC 15509 / TH2)).